The sequence spans 223 residues: Chalcone--flavanone isomerase 2 (223 aa).

Substrate-binding residues include T41, N106, and S183.

It belongs to the chalcone isomerase family.

The enzyme catalyses a chalcone = a flavanone.. It participates in secondary metabolite biosynthesis; flavonoid biosynthesis. Functionally, catalyzes the intramolecular cyclization of bicyclic chalcones into tricyclic (S)-flavanones. Responsible for the isomerization of 4,2',4',6'-tetrahydroxychalcone (also termed chalcone) into naringenin. In Arabidopsis thaliana (Mouse-ear cress), this protein is Chalcone--flavanone isomerase 2 (CHI2).